The sequence spans 566 residues: 5'-AMP-activated protein kinase subunit gamma-2 (566 aa).

A disordered region spans residues 1–198 (MGSAAMDTKK…SRIYASSSPP (198 aa)). Low complexity predominate over residues 15–25 (SSPGGSSGKKN). Residues 54-64 (NSEKHSSRKVD) show a composition bias toward basic and acidic residues. Phosphoserine is present on residues Ser65, Ser71, Ser73, Ser90, Ser138, Ser143, Ser158, Ser161, and Ser162. Composition is skewed to low complexity over residues 132-144 (KESSPNSNPSTSP) and 156-172 (TSSVSSSPSTPTQVTKQ). Thr165 carries the post-translational modification Phosphothreonine. A compositionally biased stretch (basic and acidic residues) spans 180 to 189 (YKQEPERPES). Residue Ser196 is modified to Phosphoserine. CBS domains lie at 272–332 (PTSS…KSPM), 354–412 (TFKP…MSDM), and 427–489 (IGTY…NLDI). Residues Arg299, 314–319 (MLTITD), Val359, 380–381 (HR), and Lys399 contribute to the ADP site. Residues Arg299, 314 to 319 (MLTITD), Val359, His380, 380 to 381 (HR), Lys399, Thr429, Ala434, 455 to 456 (SA), 471 to 474 (SKFD), Arg498, His527, 527 to 528 (HR), and 543 to 546 (SLSD) contribute to the AMP site. Residues Arg299, 314-319 (MLTITD), Val359, 380-381 (HR), Arg381, and Lys399 each bind ATP. The AMPK pseudosubstrate signature appears at 367–388 (LFDAVYSLIKNKIHRLPVIDPI). Residues 471-474 (SKFD), Arg498, and 527-528 (HR) contribute to the ADP site. ATP-binding positions include 471–474 (SKFD), Arg498, and 527–528 (HR). The CBS 4 domain maps to 501-559 (YFEGVVKCSKLETLETIVDRIVRAEVHRLVVVNEADSIVGIISLSDILQALILTPAGAK).

This sequence belongs to the 5'-AMP-activated protein kinase gamma subunit family. AMPK is a heterotrimer of an alpha catalytic subunit (PRKAA1 or PRKAA2), a beta (PRKAB1 or PRKAB2) and a gamma non-catalytic subunits (PRKAG1, PRKAG2 or PRKAG3). Interacts with FNIP1 and FNIP2. In terms of processing, phosphorylated by ULK1; leading to negatively regulate AMPK activity and suggesting the existence of a regulatory feedback loop between ULK1 and AMPK. Glycosylated; O-GlcNAcylated by OGT, promoting the AMP-activated protein kinase (AMPK) activity.

In terms of biological role, AMP/ATP-binding subunit of AMP-activated protein kinase (AMPK), an energy sensor protein kinase that plays a key role in regulating cellular energy metabolism. In response to reduction of intracellular ATP levels, AMPK activates energy-producing pathways and inhibits energy-consuming processes: inhibits protein, carbohydrate and lipid biosynthesis, as well as cell growth and proliferation. AMPK acts via direct phosphorylation of metabolic enzymes, and by longer-term effects via phosphorylation of transcription regulators. Also acts as a regulator of cellular polarity by remodeling the actin cytoskeleton; probably by indirectly activating myosin. Gamma non-catalytic subunit mediates binding to AMP, ADP and ATP, leading to activate or inhibit AMPK: AMP-binding results in allosteric activation of alpha catalytic subunit (PRKAA1 or PRKAA2) both by inducing phosphorylation and preventing dephosphorylation of catalytic subunits. ADP also stimulates phosphorylation, without stimulating already phosphorylated catalytic subunit. ATP promotes dephosphorylation of catalytic subunit, rendering the AMPK enzyme inactive. The chain is 5'-AMP-activated protein kinase subunit gamma-2 (Prkag2) from Mus musculus (Mouse).